A 149-amino-acid chain; its full sequence is Snake venom vascular endothelial growth factor toxin 2 (149 aa).

The signal sequence occupies residues 1–24 (MAAYLLAVAILFCIQGWPSGTVQG). The residue at position 25 (Q25) is a Pyrrolidone carboxylic acid. Intrachain disulfides connect C38/C80, C69/C115, and C73/C117. The interval 118–149 (RPRSGRVNSGKRKRNPEEGGAESQVPLGLTSF) is disordered.

Belongs to the PDGF/VEGF growth factor family. Snake venom VEGF subfamily. As to quaternary structure, homodimer; disulfide-linked. Interacts with VEGF receptor-1 (FLT1) with a high affinity, whereas it binds to VEGF receptor-2 (KDR) with a low affinity. Does not bind VEGF receptor-3 (FLT4). Expressed by the venom gland.

The protein resides in the secreted. Functionally, snake venom VEGFs that may contribute to venom dispersion and prey subjugation by inducing vascular permeability and hypotension. This protein induces an increase in capillary permeability after intradermal injection, as well as a drastic hypotensive effect after intravenous injection. The hypotension is mediated by nitric oxide (NO), which is produced by VEGF-activated endothelium NO synthase. Also induces angiogenesis in vitro. Like other crotalid VEGFs, this protein interacts with VEGF receptor-1 (FLT1) with a high affinity, whereas it binds to VEGF receptor-2 (KDR) with a low affinity. The sequence is that of Snake venom vascular endothelial growth factor toxin 2 from Sistrurus catenatus edwardsii (Desert massasauga).